Here is a 247-residue protein sequence, read N- to C-terminus: MHLLTLHLLLLLLGSSTKAGEIIGGTECIPHSRPYMAYLEIVTSENYLSACSGFLIRRNFVLTAAHCAGRSITVLLGAHNKTSKEDTWQKLEVEKQFLHPKYDENLVVHDIMLLKLKEKAKLTLGVGTLPLSANFNFIPPGRMCRAVGWGRTNVNEPASDTLQEVKMRLQEPQACKHFTSFRHNSQLCVGNPKKMQNVYKGDSGGPLLCAGIAQGIASYVHRNAKPPAVFTRISHYRPWINKILREN.

Residues 1–19 form the signal peptide; the sequence is MHLLTLHLLLLLLGSSTKA. The propeptide at 20-21 is activation peptide; it reads GE. The 224-residue stretch at 22-245 folds into the Peptidase S1 domain; it reads IIGGTECIPH…YRPWINKILR (224 aa). An intrachain disulfide couples cysteine 51 to cysteine 67. Catalysis depends on histidine 66, which acts as the Charge relay system. Asparagine 80 carries an N-linked (GlcNAc...) asparagine glycan. Residue aspartate 110 is the Charge relay system of the active site. 2 cysteine pairs are disulfide-bonded: cysteine 144-cysteine 209 and cysteine 175-cysteine 188. The active-site Charge relay system is serine 203.

It belongs to the peptidase S1 family. Granzyme subfamily. As to expression, mast cells.

Its subcellular location is the secreted. It is found in the cytoplasmic granule. It catalyses the reaction Preferential cleavage: Phe-|-Xaa &gt; Tyr-|-Xaa &gt; Trp-|-Xaa &gt; Leu-|-Xaa.. Major secreted protease of mast cells with suspected roles in vasoactive peptide generation, extracellular matrix degradation, and regulation of gland secretion. The sequence is that of Chymase (Cma1) from Mus musculus (Mouse).